A 369-amino-acid chain; its full sequence is MSVGIVQEQSVTFDTELRLESGRILGPITLAYETYGELNADRSNAILVAHAWTGNAHLAGKNSEEDTKPGWWDAIVGPGRLLDTDRCFVICSNVIGSCYGSTGPASINPKTGKRYNLTFPVITVRDMVRAQALLLDHLGIDRLLTVLGGSMGGMQALEWATQFPDRIRSAIALATTSRPSPQAISLNAVARWAIFNDPTWKKGEYRKNPKDGLALARGIGHITFLSDESMWQKFGRRFNARDGLFDFFGQFEVERYLSYNGYNFVDRFDTNSFLYLAKALDLYDTAWGYESLEEAFSRVKAPIQFFAFTSDWLYPPYQTEEMATILRSLGKPVEYHLIESAYGHDAFLLEHETFAPMVREFLDKVERSE.

Residues 44 to 350 (NAILVAHAWT…AYGHDAFLLE (307 aa)) form the AB hydrolase-1 domain. Serine 150 functions as the Nucleophile in the catalytic mechanism. Arginine 217 lines the substrate pocket. Catalysis depends on residues aspartate 311 and histidine 344. Aspartate 345 is a binding site for substrate.

The protein belongs to the AB hydrolase superfamily. MetX family. Homodimer.

Its subcellular location is the cytoplasm. The catalysed reaction is L-homoserine + acetyl-CoA = O-acetyl-L-homoserine + CoA. The protein operates within amino-acid biosynthesis; L-methionine biosynthesis via de novo pathway; O-acetyl-L-homoserine from L-homoserine: step 1/1. Transfers an acetyl group from acetyl-CoA to L-homoserine, forming acetyl-L-homoserine. This chain is Homoserine O-acetyltransferase, found in Geobacter metallireducens (strain ATCC 53774 / DSM 7210 / GS-15).